The following is a 4318-amino-acid chain: Cytoplasmic dynein 2 heavy chain 1 (4318 aa).

Positions 1–1658 (MPAEDARKEY…IMRMVDAEFQ (1658 aa)) are stem. 147 to 154 (LKSLVRKQ) serves as a coordination point for ATP. 2 coiled-coil regions span residues 1328-1354 (DKAT…QRKW) and 1402-1431 (LRTT…RSIL). 4 AAA regions span residues 1659–1883 (YTYE…VLRG), 1951–2171 (DAIR…RQGD), 2261–2515 (ASDF…WVLG), and 2623–2871 (TFAR…SSSV). 1697–1704 (GPAGTGKT) contacts ATP. A coiled-coil region spans residues 1959–1986 (EHNLVVMETQVKKALELYEQLRQRMGVV). ATP contacts are provided by residues 1989–1996 (GPSGSGKS), 2301–2308 (GPDGCGKG), and 2661–2668 (GRSGVGRR). Residues 2888-3176 (DVYRRKKQGV…YELEKEQETI (289 aa)) form a stalk region. Coiled coils occupy residues 2908–2989 (VAKL…AEIE) and 3423–3480 (QHEK…KTKE). AAA regions lie at residues 3251 to 3487 (LSTE…TITQ) and 3699 to 3914 (MTFF…IIDR).

It belongs to the dynein heavy chain family. In terms of assembly, the cytoplasmic dynein complex 2 is probably composed by a heavy chain DYH1B homodimer and a number of light intermediate chains.

It is found in the cytoplasm. The protein localises to the cytoskeleton. The protein resides in the cilium axoneme. It localises to the cell membrane. May function as a motor for intraflagellar retrograde transport. Functions in cilia biogenesis. This Tripneustes gratilla (Hawaian sea urchin) protein is Cytoplasmic dynein 2 heavy chain 1 (DYH1B).